The chain runs to 198 residues: Angiopoietin-like protein 8 (198 aa).

Positions 1 to 15 are cleaved as a signal peptide; the sequence is MAVLALCLLWTLASA.

Belongs to the ANGPTL8 family. In terms of assembly, interacts with ANGPTL3. In terms of processing, proteolytically cleaved at the N-terminus. Expressed in liver and fat. Enriched in white and brown adipose tissues.

The protein resides in the secreted. Functionally, hormone that acts as a blood lipid regulator by regulating serum triglyceride levels. May be involved in the metabolic transition between fasting and refeeding: required to direct fatty acids to adipose tissue for storage in the fed state. According to a report, may act by promoting ANGPTL3 cleavage. According to another study, not required for cleavage of ANGPTL3. The protein is Angiopoietin-like protein 8 of Mus musculus (Mouse).